Consider the following 82-residue polypeptide: Beta-defensin 119 (82 aa).

An N-terminal signal peptide occupies residues 1–19; it reads MKFFLFFVILLAMEPVISG. 3 cysteine pairs are disulfide-bonded: C26–C53, C33–C47, and C37–C54.

Belongs to the beta-defensin family.

The protein localises to the secreted. Has antibacterial activity. The sequence is that of Beta-defensin 119 (DEFB119) from Canis lupus familiaris (Dog).